The following is a 439-amino-acid chain: tRNA-2-methylthio-N(6)-dimethylallyladenosine synthase (439 aa).

Residues 2–119 (KYIYIKTWGC…LPKMIDEVEK (118 aa)) enclose the MTTase N-terminal domain. The [4Fe-4S] cluster site is built by Cys-11, Cys-48, Cys-82, Cys-156, Cys-160, and Cys-163. The 233-residue stretch at 142–374 (KKKGYTADIS…QERINIQTML (233 aa)) folds into the Radical SAM core domain. The TRAM domain occupies 377–439 (RKMFGSIQSV…HTHSLKGELF (63 aa)).

It belongs to the methylthiotransferase family. MiaB subfamily. As to quaternary structure, monomer. Requires [4Fe-4S] cluster as cofactor.

It localises to the cytoplasm. The catalysed reaction is N(6)-dimethylallyladenosine(37) in tRNA + (sulfur carrier)-SH + AH2 + 2 S-adenosyl-L-methionine = 2-methylsulfanyl-N(6)-dimethylallyladenosine(37) in tRNA + (sulfur carrier)-H + 5'-deoxyadenosine + L-methionine + A + S-adenosyl-L-homocysteine + 2 H(+). Functionally, catalyzes the methylthiolation of N6-(dimethylallyl)adenosine (i(6)A), leading to the formation of 2-methylthio-N6-(dimethylallyl)adenosine (ms(2)i(6)A) at position 37 in tRNAs that read codons beginning with uridine. This Buchnera aphidicola subsp. Acyrthosiphon pisum (strain APS) (Acyrthosiphon pisum symbiotic bacterium) protein is tRNA-2-methylthio-N(6)-dimethylallyladenosine synthase.